Reading from the N-terminus, the 434-residue chain is 3-phosphoshikimate 1-carboxyvinyltransferase (434 aa).

Positions 22, 23, and 27 each coordinate 3-phosphoshikimate. K22 serves as a coordination point for phosphoenolpyruvate. Residues G93 and R121 each contribute to the phosphoenolpyruvate site. Residues S168, S169, Q170, S199, D320, and K347 each contribute to the 3-phosphoshikimate site. Position 170 (Q170) interacts with phosphoenolpyruvate. D320 (proton acceptor) is an active-site residue. Residues R351, R395, and K420 each contribute to the phosphoenolpyruvate site.

This sequence belongs to the EPSP synthase family. Monomer.

The protein resides in the cytoplasm. The catalysed reaction is 3-phosphoshikimate + phosphoenolpyruvate = 5-O-(1-carboxyvinyl)-3-phosphoshikimate + phosphate. It participates in metabolic intermediate biosynthesis; chorismate biosynthesis; chorismate from D-erythrose 4-phosphate and phosphoenolpyruvate: step 6/7. In terms of biological role, catalyzes the transfer of the enolpyruvyl moiety of phosphoenolpyruvate (PEP) to the 5-hydroxyl of shikimate-3-phosphate (S3P) to produce enolpyruvyl shikimate-3-phosphate and inorganic phosphate. This is 3-phosphoshikimate 1-carboxyvinyltransferase from Cupriavidus necator (strain ATCC 17699 / DSM 428 / KCTC 22496 / NCIMB 10442 / H16 / Stanier 337) (Ralstonia eutropha).